The primary structure comprises 221 residues: uncharacterized protein (221 aa).

This is an uncharacterized protein from Shigella flexneri.